Here is a 201-residue protein sequence, read N- to C-terminus: Large ribosomal subunit protein uL4 (201 aa).

Positions 43 to 71 are disordered; it reads TRAQKTRSEVSGGGKKPWAQKGTGRARAG.

Belongs to the universal ribosomal protein uL4 family. As to quaternary structure, part of the 50S ribosomal subunit.

Functionally, one of the primary rRNA binding proteins, this protein initially binds near the 5'-end of the 23S rRNA. It is important during the early stages of 50S assembly. It makes multiple contacts with different domains of the 23S rRNA in the assembled 50S subunit and ribosome. Forms part of the polypeptide exit tunnel. The chain is Large ribosomal subunit protein uL4 from Pseudoalteromonas translucida (strain TAC 125).